The sequence spans 283 residues: uncharacterized protein (283 aa).

A lipid anchor (N-myristoyl glycine; by host) is attached at Gly-2. N-linked (GlcNAc...) asparagine; by host glycosylation is found at Asn-31, Asn-95, Asn-105, Asn-108, Asn-137, and Asn-147. 2 consecutive transmembrane segments (helical) span residues 181–201 and 250–270; these read IIAAIIIIVIIAVIIGAVVYF and FIVLLIMVLIIVILLKTLDIP. Asn-277 is a glycosylation site (N-linked (GlcNAc...) asparagine; by host).

The protein localises to the membrane. This is an uncharacterized protein from Acanthamoeba polyphaga (Amoeba).